Consider the following 544-residue polypeptide: Glucans biosynthesis protein G 1 (544 aa).

A signal peptide spans M1–A33. Residues S36 to A58 are disordered.

It belongs to the OpgD/OpgG family.

The protein resides in the periplasm. It participates in glycan metabolism; osmoregulated periplasmic glucan (OPG) biosynthesis. Involved in the biosynthesis of osmoregulated periplasmic glucans (OPGs). In Shewanella oneidensis (strain ATCC 700550 / JCM 31522 / CIP 106686 / LMG 19005 / NCIMB 14063 / MR-1), this protein is Glucans biosynthesis protein G 1 (opgG1).